Reading from the N-terminus, the 118-residue chain is Large ribosomal subunit protein uL24 (118 aa).

This sequence belongs to the universal ribosomal protein uL24 family. In terms of assembly, part of the 50S ribosomal subunit.

In terms of biological role, one of two assembly initiator proteins, it binds directly to the 5'-end of the 23S rRNA, where it nucleates assembly of the 50S subunit. Functionally, one of the proteins that surrounds the polypeptide exit tunnel on the outside of the subunit. This is Large ribosomal subunit protein uL24 from Prochlorococcus marinus (strain MIT 9515).